The following is a 135-amino-acid chain: Mini-ribonuclease 3 (135 aa).

The active site involves Asp-17.

Belongs to the MrnC RNase family. Homodimer. Mg(2+) is required as a cofactor.

It is found in the cytoplasm. In terms of biological role, involved in correct processing of both the 5' and 3' ends of 23S rRNA precursor. Processes 30S rRNA precursor transcript even in absence of ribonuclease 3 (Rnc); Rnc processes 30S rRNA into smaller rRNA precursors. This chain is Mini-ribonuclease 3, found in Bacillus cereus (strain ATCC 14579 / DSM 31 / CCUG 7414 / JCM 2152 / NBRC 15305 / NCIMB 9373 / NCTC 2599 / NRRL B-3711).